Consider the following 371-residue polypeptide: E3 ubiquitin-protein ligase RHF1A (371 aa).

Residues 46 to 87 form an RING-type; atypical zinc finger; the sequence is CSICLEPFTLQDPSTVTSCKHEYHLQCIIEWSQRSKECPICW. Disordered regions lie at residues 199-254 and 348-371; these read HQNS…SSLP and EANS…GETC. Residues 200-225 are compositionally biased toward polar residues; that stretch reads QNSNPCPSPGSMTPSPVSGHSSIPAD. The segment covering 226 to 252 has biased composition (low complexity); sequence SNNGSRISPGPSPSRSSQSPKSPEASS.

In terms of assembly, interacts with KRP6. In terms of tissue distribution, expressed in stems, flowers, green siliques, cauline leaves, seeds and roots.

The enzyme catalyses S-ubiquitinyl-[E2 ubiquitin-conjugating enzyme]-L-cysteine + [acceptor protein]-L-lysine = [E2 ubiquitin-conjugating enzyme]-L-cysteine + N(6)-ubiquitinyl-[acceptor protein]-L-lysine.. The protein operates within protein modification; protein ubiquitination. Its function is as follows. E3 ubiquitin-protein ligase involved in the positive regulation of the gametogenesis progression. Mediates the proteasomal degradation of KRP6, a cyclin-dependent kinase inhibitor which accumulates during meiosis and blocks the progression of subsequent mitoses during gametophyte development. Functions in association with RHF2A. Possesses E3 ubiquitin-protein ligase activity when associated with the E2 enzyme UBC8 in vitro. This Arabidopsis thaliana (Mouse-ear cress) protein is E3 ubiquitin-protein ligase RHF1A.